Consider the following 502-residue polypeptide: Bifunctional purine biosynthesis protein PurH (502 aa).

The 144-residue stretch at 1–144 folds into the MGS-like domain; that stretch reads MKKRALISVF…KNFQDVVVIS (144 aa).

The protein belongs to the PurH family.

The enzyme catalyses (6R)-10-formyltetrahydrofolate + 5-amino-1-(5-phospho-beta-D-ribosyl)imidazole-4-carboxamide = 5-formamido-1-(5-phospho-D-ribosyl)imidazole-4-carboxamide + (6S)-5,6,7,8-tetrahydrofolate. It catalyses the reaction IMP + H2O = 5-formamido-1-(5-phospho-D-ribosyl)imidazole-4-carboxamide. It participates in purine metabolism; IMP biosynthesis via de novo pathway; 5-formamido-1-(5-phospho-D-ribosyl)imidazole-4-carboxamide from 5-amino-1-(5-phospho-D-ribosyl)imidazole-4-carboxamide (10-formyl THF route): step 1/1. Its pathway is purine metabolism; IMP biosynthesis via de novo pathway; IMP from 5-formamido-1-(5-phospho-D-ribosyl)imidazole-4-carboxamide: step 1/1. This Clostridium beijerinckii (strain ATCC 51743 / NCIMB 8052) (Clostridium acetobutylicum) protein is Bifunctional purine biosynthesis protein PurH.